The primary structure comprises 884 residues: Translation initiation factor IF-2 (884 aa).

Disordered regions lie at residues 42-62 (DVQK…QEEV) and 123-254 (EPKG…GGKK). The span at 194-212 (PAERREVVIPPKRKMEERA) shows a compositional bias: basic and acidic residues. The span at 234 to 248 (EPETPAGGAPGAKKG) shows a compositional bias: low complexity. One can recognise a tr-type G domain in the interval 384–553 (KRPPVVTIMG…LLQADVMDLK (170 aa)). The tract at residues 393 to 400 (GHVDHGKT) is G1. A GTP-binding site is contributed by 393-400 (GHVDHGKT). Positions 418–422 (GITQH) are G2. The G3 stretch occupies residues 439 to 442 (DTPG). GTP-binding positions include 439 to 443 (DTPGH) and 493 to 496 (NKID). Positions 493–496 (NKID) are G4. Residues 529-531 (SAK) are G5.

Belongs to the TRAFAC class translation factor GTPase superfamily. Classic translation factor GTPase family. IF-2 subfamily.

It localises to the cytoplasm. In terms of biological role, one of the essential components for the initiation of protein synthesis. Protects formylmethionyl-tRNA from spontaneous hydrolysis and promotes its binding to the 30S ribosomal subunits. Also involved in the hydrolysis of GTP during the formation of the 70S ribosomal complex. The protein is Translation initiation factor IF-2 of Geobacter metallireducens (strain ATCC 53774 / DSM 7210 / GS-15).